Consider the following 550-residue polypeptide: MLKNINPTQTQAWKALTAHFESAQDMDLKELFAQDAARFDKYSARFGSDILVDYSKNLINEETLKHLFALANETELKSAIEAMFSGEAINKTEDRAVLHTALRNRSNTPVMVGGEDVMPAVNAVLEKIKSFTERVIGGEWKGYTGKAITDIVNIGIGGSDLGPYMVTEALAPYKNHLNLHFVSNVDGTHIVETLKKVDPETTLFLIASKTFTTQETMTNAHSARDWFLATAGDQAHVAKHFAALSTNAPAVSEFGIDTDNMFEFWDWVGGRYSLWSAIGLSIALAVGYDNFIELLDGAHEMDNHFVSTDLESNIPVILALIGIWYNNFHGAESEAILPYDQYMHRFAAYFQQGNMESNGKYVDREGNAVTYQTGPIIWGEPGTNGQHAFYQLIHQGTKLIPCDFIAPAISHNPASDHHQKLMSNFFAQTEALAFGKSAETVKAEFAKAGKSEEEMASLVPFKVFEGNRPTNSILVKQITPRTLGNLIAMYEHKIFVQGVIWNIFSFDQWGVELGKQLANQILPELADESEINSHDSSTNGLINAFKAFKA.

Glu356 (proton donor) is an active-site residue. Catalysis depends on residues His387 and Lys515.

Belongs to the GPI family.

It is found in the cytoplasm. The catalysed reaction is alpha-D-glucose 6-phosphate = beta-D-fructose 6-phosphate. It functions in the pathway carbohydrate biosynthesis; gluconeogenesis. The protein operates within carbohydrate degradation; glycolysis; D-glyceraldehyde 3-phosphate and glycerone phosphate from D-glucose: step 2/4. Catalyzes the reversible isomerization of glucose-6-phosphate to fructose-6-phosphate. The sequence is that of Glucose-6-phosphate isomerase from Vibrio campbellii (strain ATCC BAA-1116).